Here is a 372-residue protein sequence, read N- to C-terminus: 3 beta-hydroxysteroid dehydrogenase/Delta 5--&gt;4-isomerase type 2 (372 aa).

The active-site Proton acceptor is the Y154. K158 serves as a coordination point for NAD(+). A helical transmembrane segment spans residues 287–307; it reads LTLMYWIGFLLEVVSFLLSPI.

This sequence belongs to the 3-beta-HSD family. As to expression, expressed in adrenal gland, testis and ovary.

It localises to the endoplasmic reticulum membrane. It is found in the mitochondrion membrane. The catalysed reaction is a 3beta-hydroxy-Delta(5)-steroid + NAD(+) = a 3-oxo-Delta(5)-steroid + NADH + H(+). The enzyme catalyses a 3-oxo-Delta(5)-steroid = a 3-oxo-Delta(4)-steroid. It catalyses the reaction pregnenolone + NAD(+) = pregn-5-ene-3,20-dione + NADH + H(+). It carries out the reaction pregn-5-ene-3,20-dione = progesterone. The catalysed reaction is 3beta-hydroxyandrost-5-en-17-one + NAD(+) = androst-5-ene-3,17-dione + NADH + H(+). The enzyme catalyses androst-5-ene-3,17-dione = androst-4-ene-3,17-dione. It participates in lipid metabolism; steroid biosynthesis. Functionally, 3-beta-HSD is a bifunctional enzyme, that catalyzes the oxidative conversion of Delta(5)-ene-3-beta-hydroxy steroid, and the oxidative conversion of ketosteroids. The 3-beta-HSD enzymatic system plays a crucial role in the biosynthesis of all classes of hormonal steroids. This chain is 3 beta-hydroxysteroid dehydrogenase/Delta 5--&gt;4-isomerase type 2, found in Homo sapiens (Human).